The primary structure comprises 686 residues: ATP-dependent zinc metalloprotease FtsH 2 (686 aa).

The Cytoplasmic segment spans residues 1 to 11 (MKKNIKDIFKN). Residues 12–32 (FNIFWFCFIFLLLSLLYCLIM) form a helical membrane-spanning segment. The Extracellular portion of the chain corresponds to 33–178 (MEISHQHDNN…LQRIPYQPYF (146 aa)). Residues 179–199 (GFAPFISAVNICILIIIFYFI) form a helical membrane-spanning segment. Residues 200–686 (YNSIEKTSAQ…QKSEKEDCNK (487 aa)) are Cytoplasmic-facing. 272 to 279 (GPPGVGKT) is an ATP binding site. H493 contacts Zn(2+). Residue E494 is part of the active site. Residues H497 and D569 each contribute to the Zn(2+) site.

It in the central section; belongs to the AAA ATPase family. The protein in the C-terminal section; belongs to the peptidase M41 family. Homohexamer. Requires Zn(2+) as cofactor.

It localises to the cell membrane. Acts as a processive, ATP-dependent zinc metallopeptidase for both cytoplasmic and membrane proteins. Plays a role in the quality control of integral membrane proteins. The protein is ATP-dependent zinc metalloprotease FtsH 2 of Phytoplasma mali (strain AT).